The primary structure comprises 274 residues: Orotidine 5'-phosphate decarboxylase (274 aa).

The active-site Proton donor is the Lys95.

It belongs to the OMP decarboxylase family. Type 2 subfamily.

The enzyme catalyses orotidine 5'-phosphate + H(+) = UMP + CO2. Its pathway is pyrimidine metabolism; UMP biosynthesis via de novo pathway; UMP from orotate: step 2/2. The polypeptide is Orotidine 5'-phosphate decarboxylase (Mycobacterium avium (strain 104)).